The primary structure comprises 426 residues: Phosphomethylpyrimidine synthase (426 aa).

Residues asparagine 65, methionine 94, tyrosine 123, histidine 162, 184–186 (SRG), 225–228 (DGMR), and glutamate 264 each bind substrate. Histidine 268 lines the Zn(2+) pocket. Residue tyrosine 291 coordinates substrate. Position 332 (histidine 332) interacts with Zn(2+). Residues cysteine 408, cysteine 411, and cysteine 415 each coordinate [4Fe-4S] cluster.

This sequence belongs to the ThiC family. The cofactor is [4Fe-4S] cluster.

The catalysed reaction is 5-amino-1-(5-phospho-beta-D-ribosyl)imidazole + S-adenosyl-L-methionine = 4-amino-2-methyl-5-(phosphooxymethyl)pyrimidine + CO + 5'-deoxyadenosine + formate + L-methionine + 3 H(+). Its pathway is cofactor biosynthesis; thiamine diphosphate biosynthesis. Catalyzes the synthesis of the hydroxymethylpyrimidine phosphate (HMP-P) moiety of thiamine from aminoimidazole ribotide (AIR) in a radical S-adenosyl-L-methionine (SAM)-dependent reaction. This Methanococcus aeolicus (strain ATCC BAA-1280 / DSM 17508 / OCM 812 / Nankai-3) protein is Phosphomethylpyrimidine synthase.